The following is a 309-amino-acid chain: Homoserine kinase (309 aa).

Residue 91-101 coordinates ATP; the sequence is PIGSGLGSSAC.

This sequence belongs to the GHMP kinase family. Homoserine kinase subfamily.

The protein resides in the cytoplasm. It catalyses the reaction L-homoserine + ATP = O-phospho-L-homoserine + ADP + H(+). It functions in the pathway amino-acid biosynthesis; L-threonine biosynthesis; L-threonine from L-aspartate: step 4/5. Catalyzes the ATP-dependent phosphorylation of L-homoserine to L-homoserine phosphate. In Klebsiella pneumoniae subsp. pneumoniae (strain ATCC 700721 / MGH 78578), this protein is Homoserine kinase.